We begin with the raw amino-acid sequence, 217 residues long: MLLIYGIFAFVVLVFFYLLGKETGGEMEEEYRLREYLEVLKNRNVVILSVIAFIGVGIFTAYLTWVEPVLEEHGLTVETAGLTATAFLLGGIFGSIIIPALSDRAGKRKPFLYLCFIISAVLFYIHAIAFGMAMVAAVLFVLGFFFISALPLALDLSATSVGEQFAGTANSSLWLFSQVGSVVLIVLFESMASWNSTLLLSAGLLAVSFLLALQLKE.

7 helical membrane passes run 4-23 (IYGIFAFVVLVFFYLLGKET), 44-66 (NVVILSVIAFIGVGIFTAYLTWV), 76-98 (TVETAGLTATAFLLGGIFGSIII), 111-128 (FLYLCFIISAVLFYIHAI), 132-154 (MAMVAAVLFVLGFFFISALPLAL), 166-188 (AGTANSSLWLFSQVGSVVLIVLF), and 198-215 (LLLSAGLLAVSFLLALQL).

Its subcellular location is the cell membrane. This is an uncharacterized protein from Archaeoglobus fulgidus (strain ATCC 49558 / DSM 4304 / JCM 9628 / NBRC 100126 / VC-16).